Here is a 209-residue protein sequence, read N- to C-terminus: N-(5'-phosphoribosyl)anthranilate isomerase (209 aa).

The protein belongs to the TrpF family.

It carries out the reaction N-(5-phospho-beta-D-ribosyl)anthranilate = 1-(2-carboxyphenylamino)-1-deoxy-D-ribulose 5-phosphate. The protein operates within amino-acid biosynthesis; L-tryptophan biosynthesis; L-tryptophan from chorismate: step 3/5. The sequence is that of N-(5'-phosphoribosyl)anthranilate isomerase from Granulibacter bethesdensis (strain ATCC BAA-1260 / CGDNIH1).